A 261-amino-acid polypeptide reads, in one-letter code: MSESLHLTRNGSILEITLDRPKANAIDAKTSFEMGEVFLNFRDDPQLRVAIITGAGEKFFSAGWDLKAAAEGEAPDADFGPGGFAGLTEIFNLDKPVIAAVNGYAFGGGFELALAADFIVCADNASFALPEAKLGIVPDSGGVLRLPKILPPAIVNEMVMTGRRMGAEEALRWGVVNRVVSQAELMDNARELAQQLVNSAPLAIAALKEIYRTTSEMPVEEAYRYIRSGVLKNYPSVLHSEDAIEGPLAFAEKRDPVWKGR.

The Nucleophile role is filled by E111. E131 functions as the Proton acceptor in the catalytic mechanism.

This sequence belongs to the enoyl-CoA hydratase/isomerase family.

It catalyses the reaction (R)-carnitinyl-CoA = crotonobetainyl-CoA + H2O. It functions in the pathway amine and polyamine metabolism; carnitine metabolism. Its function is as follows. Catalyzes the reversible dehydration of L-carnitinyl-CoA to crotonobetainyl-CoA. The chain is Carnitinyl-CoA dehydratase from Escherichia coli (strain SMS-3-5 / SECEC).